Here is a 200-residue protein sequence, read N- to C-terminus: Guanylate kinase (200 aa).

Residues 4–183 (GAVLIISGPS…AKEAMVAIAR (180 aa)) form the Guanylate kinase-like domain. An ATP-binding site is contributed by 11 to 18 (GPSGCGKS).

This sequence belongs to the guanylate kinase family.

It is found in the cytoplasm. The enzyme catalyses GMP + ATP = GDP + ADP. Functionally, essential for recycling GMP and indirectly, cGMP. In Helicobacter hepaticus (strain ATCC 51449 / 3B1), this protein is Guanylate kinase.